A 282-amino-acid chain; its full sequence is Trihydroxynaphthalene reductase (282 aa).

NADP(+) contacts are provided by Ile-41, Asn-114, and Arg-147. Active-site proton donor residues include Ser-164 and Tyr-178. The NADP(+) site is built by Tyr-178, Lys-182, Ile-211, and Thr-213. Residue Lys-182 is the Lowers pKa of active site Tyr of the active site.

It belongs to the short-chain dehydrogenases/reductases (SDR) family. As to quaternary structure, homotetramer.

It participates in pigment biosynthesis; melanin biosynthesis. Catalyzes the NADPH-dependent reduction of 1,3,8-trihydroxynaphthalene (T3HN) into (-)-vermelone. Essential for appressorial penetration of colletotrichum lagenarium. This chain is Trihydroxynaphthalene reductase (THR1), found in Colletotrichum orbiculare (strain 104-T / ATCC 96160 / CBS 514.97 / LARS 414 / MAFF 240422) (Cucumber anthracnose fungus).